A 547-amino-acid polypeptide reads, in one-letter code: Chaperonin GroEL (547 aa).

ATP-binding positions include 30 to 33, Lys51, 87 to 91, Gly415, and Asp495; these read TLGP and DGTTT.

The protein belongs to the chaperonin (HSP60) family. As to quaternary structure, forms a cylinder of 14 subunits composed of two heptameric rings stacked back-to-back. Interacts with the co-chaperonin GroES.

It localises to the cytoplasm. It catalyses the reaction ATP + H2O + a folded polypeptide = ADP + phosphate + an unfolded polypeptide.. In terms of biological role, together with its co-chaperonin GroES, plays an essential role in assisting protein folding. The GroEL-GroES system forms a nano-cage that allows encapsulation of the non-native substrate proteins and provides a physical environment optimized to promote and accelerate protein folding. This Allorhizobium ampelinum (strain ATCC BAA-846 / DSM 112012 / S4) (Agrobacterium vitis (strain S4)) protein is Chaperonin GroEL.